The following is a 255-amino-acid chain: Pyridoxine 5'-phosphate synthase (255 aa).

3-amino-2-oxopropyl phosphate-binding residues include N8 and R19. H44 functions as the Proton acceptor in the catalytic mechanism. R46 and H51 together coordinate 1-deoxy-D-xylulose 5-phosphate. E74 (proton acceptor) is an active-site residue. Position 111 (T111) interacts with 1-deoxy-D-xylulose 5-phosphate. H202 serves as the catalytic Proton donor. Residues D203 and 225–226 (GH) each bind 3-amino-2-oxopropyl phosphate.

This sequence belongs to the PNP synthase family. In terms of assembly, homooctamer; tetramer of dimers.

Its subcellular location is the cytoplasm. The enzyme catalyses 3-amino-2-oxopropyl phosphate + 1-deoxy-D-xylulose 5-phosphate = pyridoxine 5'-phosphate + phosphate + 2 H2O + H(+). It functions in the pathway cofactor biosynthesis; pyridoxine 5'-phosphate biosynthesis; pyridoxine 5'-phosphate from D-erythrose 4-phosphate: step 5/5. Its function is as follows. Catalyzes the complicated ring closure reaction between the two acyclic compounds 1-deoxy-D-xylulose-5-phosphate (DXP) and 3-amino-2-oxopropyl phosphate (1-amino-acetone-3-phosphate or AAP) to form pyridoxine 5'-phosphate (PNP) and inorganic phosphate. This is Pyridoxine 5'-phosphate synthase from Xanthomonas axonopodis pv. citri (strain 306).